We begin with the raw amino-acid sequence, 361 residues long: C3a anaphylatoxin chemotactic receptor (361 aa).

At 1 to 64 (MQQETQAPPL…FASSEVRVIS (64 aa)) the chain is on the extracellular side. N36 and N50 each carry an N-linked (GlcNAc...) asparagine glycan. The helical transmembrane segment at 65-85 (LVVYCLTFLLGVPGNSFVIFI) threads the bilayer. The Cytoplasmic segment spans residues 86–96 (AGMKMKRTVNT). The chain crosses the membrane as a helical span at residues 97–117 (IWFLNLATADLLCCLSVPLTV). Residues 118-134 (AEILLDHHWPYGYAMCK) are Extracellular-facing. C133 and C210 are joined by a disulfide. Residues 135-155 (ILPSVIVISMFASVFTLNIIS) traverse the membrane as a helical segment. Topologically, residues 156 to 177 (LDRFTQVITPVWAQNHRSLLLA) are cytoplasmic. Residues 178–198 (RLSCVAVWILALLLSLPFMIL) form a helical membrane-spanning segment. The Extracellular segment spans residues 199 to 224 (RRTYEEFNMTVCTFDDDDFTTYGALS). Residues 225 to 245 (IVRFVFGFLIPLMSIVTCYGI) traverse the membrane as a helical segment. Over 246 to 262 (IARKLGSRHFRSGRAFR) the chain is Cytoplasmic. The helical transmembrane segment at 263–283 (IMLAVIVAFFLCWMPYHVLDL) threads the bilayer. Residues 284-301 (IRSYGGESSSMVALKVDP) are Extracellular-facing. A helical transmembrane segment spans residues 302-322 (LAISLAYVNSCLNPVLYVFMG). The Cytoplasmic segment spans residues 323 to 361 (QDFKNKVQLSLRRVFERAFSEEGTQISRSTQSQQVHSVL).

It belongs to the G-protein coupled receptor 1 family.

It is found in the cell membrane. In terms of biological role, receptor for the chemotactic and inflammatory peptide anaphylatoxin C3a. This receptor stimulates chemotaxis, granule enzyme release and superoxide anion production. The chain is C3a anaphylatoxin chemotactic receptor (c3ar1) from Danio rerio (Zebrafish).